The sequence spans 104 residues: Large ribosomal subunit protein uL24 (104 aa).

Belongs to the universal ribosomal protein uL24 family. Part of the 50S ribosomal subunit.

Its function is as follows. One of two assembly initiator proteins, it binds directly to the 5'-end of the 23S rRNA, where it nucleates assembly of the 50S subunit. One of the proteins that surrounds the polypeptide exit tunnel on the outside of the subunit. The sequence is that of Large ribosomal subunit protein uL24 from Shewanella sp. (strain W3-18-1).